The primary structure comprises 679 residues: Glutamine-dependent NAD(+) synthetase (679 aa).

The CN hydrolase domain occupies 12 to 276; that stretch reads VRVAACTHHT…VRRSVADVDT (265 aa). Glutamate 52 (proton acceptor; for glutaminase activity) is an active-site residue. Lysine 121 acts as the For glutaminase activity in catalysis. Tyrosine 127 is a binding site for L-glutamine. Residue cysteine 176 is the Nucleophile; for glutaminase activity of the active site. Positions 203 and 209 each coordinate L-glutamine. The ligase stretch occupies residues 337–679; sequence QQDCYEAYNI…DQIDREVPKG (343 aa). An ATP-binding site is contributed by 366–373; that stretch reads GVSGGLDS. Asparagine 456 is a deamido-NAD(+) binding site. An ATP-binding site is contributed by threonine 480. Residues glutamate 485, 490–493, and lysine 635 contribute to the deamido-NAD(+) site; that span reads WSTY. The disordered stretch occupies residues 639–658; sequence LPNGPKVSHGGALSPRGDWR.

This sequence in the C-terminal section; belongs to the NAD synthetase family.

The catalysed reaction is deamido-NAD(+) + L-glutamine + ATP + H2O = L-glutamate + AMP + diphosphate + NAD(+) + H(+). The protein operates within cofactor biosynthesis; NAD(+) biosynthesis; NAD(+) from deamido-NAD(+) (L-Gln route): step 1/1. Catalyzes the ATP-dependent amidation of deamido-NAD to form NAD. Uses L-glutamine as a nitrogen source. This chain is Glutamine-dependent NAD(+) synthetase, found in Mycobacterium bovis (strain ATCC BAA-935 / AF2122/97).